Reading from the N-terminus, the 224-residue chain is Transcription factor MYB1 (224 aa).

HTH myb-type domains are found at residues 10 to 66 (LGRV…KPSI) and 67 to 117 (KRGH…YKKH). DNA-binding regions (H-T-H motif) lie at residues 38–62 (WKRV…LNYL) and 90–113 (WSLI…NTHL).

It localises to the nucleus. In terms of biological role, activates DODA1 and CYP76AD1 in the betalain red pigment pathway. This is Transcription factor MYB1 from Beta vulgaris (Sugar beet).